The chain runs to 263 residues: Elongation factor Ts (263 aa).

An involved in Mg(2+) ion dislocation from EF-Tu region spans residues 82 to 85; it reads TDFV. The span at 221–251 shows a compositional bias: low complexity; it reads APPAVVEAPVAETPEPAVAETPEAKPAATES. The interval 221–263 is disordered; the sequence is APPAVVEAPVAETPEPAVAETPEAKPAATESKPAKSKSAKKKK. A compositionally biased stretch (basic residues) spans 254-263; sequence AKSKSAKKKK.

The protein belongs to the EF-Ts family.

The protein localises to the cytoplasm. Its function is as follows. Associates with the EF-Tu.GDP complex and induces the exchange of GDP to GTP. It remains bound to the aminoacyl-tRNA.EF-Tu.GTP complex up to the GTP hydrolysis stage on the ribosome. This Cyanothece sp. (strain PCC 7425 / ATCC 29141) protein is Elongation factor Ts.